The primary structure comprises 223 residues: N-terminal Xaa-Pro-Lys N-methyltransferase 1-B (223 aa).

S-adenosyl-L-methionine contacts are provided by residues Gly69, Arg74, 91–93 (DVT), 119–120 (LQ), and Gln135.

Belongs to the methyltransferase superfamily. NTM1 family.

It localises to the nucleus. The catalysed reaction is N-terminal L-alanyl-L-prolyl-L-lysyl-[protein] + 3 S-adenosyl-L-methionine = N-terminal N,N,N-trimethyl-L-alanyl-L-prolyl-L-lysyl-[protein] + 3 S-adenosyl-L-homocysteine + 3 H(+). It carries out the reaction N-terminal L-seryl-L-prolyl-L-lysyl-[protein] + 3 S-adenosyl-L-methionine = N-terminal N,N,N-trimethyl-L-seryl-L-prolyl-L-lysyl-[protein] + 3 S-adenosyl-L-homocysteine + 3 H(+). The enzyme catalyses N-terminal L-prolyl-L-prolyl-L-lysyl-[protein] + 2 S-adenosyl-L-methionine = N-terminal N,N-dimethyl-L-prolyl-L-prolyl-L-lysyl-[protein] + 2 S-adenosyl-L-homocysteine + 2 H(+). Its function is as follows. Distributive alpha-N-methyltransferase that methylates the N-terminus of target proteins containing the N-terminal motif [Ala/Gly/Pro/Ser]-Pro-Lys when the initiator Met is cleaved. Specifically catalyzes mono-, di- or tri-methylation of the exposed alpha-amino group of the Ala, Gly or Ser residue in the [Ala/Gly/Ser]-Pro-Lys motif and mono- or di-methylation of Pro in the Pro-Pro-Lys motif. Required during mitosis for normal bipolar spindle formation and chromosome segregation via its action on target proteins. The chain is N-terminal Xaa-Pro-Lys N-methyltransferase 1-B (ntmt1-b) from Xenopus laevis (African clawed frog).